The following is a 303-amino-acid chain: MTRHFLALNQYTKEALDALFALTRELKEEQKKGIPHRILEGKSVALIFEKSSTRTRISFEVGVHQLGAHPLFISSATSQMGRGEPVRDTARVMARYCDGVMIRTYGQEIVEEFARYSSVPVINGLTDLFHPCQIMADLFTVIEHKGKYDGLKFAWVGDGNNMANTWIEAAAILGFDLALACPEGYEPDRTVWDWAQKKATSSITITRDPKEAVRDADVVNTDVWASMGQEQEQKVREVAFKGYCLDDDLVALAKPDCMVLHCLPAHRGEEITDSVIEGPRSAVWDEAENRLHVQKAIMASLLK.

Residues 52–55 (STRT), glutamine 79, arginine 103, and 130–133 (HPCQ) each bind carbamoyl phosphate. Residues asparagine 161, aspartate 222, and 226-227 (SM) each bind L-ornithine. Carbamoyl phosphate-binding positions include 262-263 (CL) and arginine 290.

This sequence belongs to the aspartate/ornithine carbamoyltransferase superfamily. OTCase family.

It is found in the cytoplasm. The enzyme catalyses carbamoyl phosphate + L-ornithine = L-citrulline + phosphate + H(+). The protein operates within amino-acid biosynthesis; L-arginine biosynthesis; L-arginine from L-ornithine and carbamoyl phosphate: step 1/3. Functionally, reversibly catalyzes the transfer of the carbamoyl group from carbamoyl phosphate (CP) to the N(epsilon) atom of ornithine (ORN) to produce L-citrulline. This Geobacter metallireducens (strain ATCC 53774 / DSM 7210 / GS-15) protein is Ornithine carbamoyltransferase.